A 435-amino-acid polypeptide reads, in one-letter code: UDP-glucuronic acid decarboxylase 1 (435 aa).

Residues 1–33 (MKQLHKQMSSKRDEETIPMSQSSPYSPKTLKHP) are disordered. Topologically, residues 1 to 48 (MKQLHKQMSSKRDEETIPMSQSSPYSPKTLKHPRSLPRSLHYLFREQR) are cytoplasmic. A helical; Signal-anchor for type II membrane protein transmembrane segment spans residues 49-69 (LLFILVGILIGSTFFILQPSL). The Lumenal segment spans residues 70–435 (SRLGAAESTS…ILNEDEGKGL (366 aa)). A compositionally biased stretch (polar residues) spans 91-100 (DSPPSRSTFN). A disordered region spans residues 91–110 (DSPPSRSTFNSGGGGGRTGR). 10 residues coordinate NAD(+): glycine 129, phenylalanine 130, valine 131, aspartate 150, asparagine 151, phenylalanine 153, threonine 154, glycine 155, aspartate 175, and valine 176. Isoleucine 180 lines the UDP-alpha-D-glucuronate pocket. Leucine 190 lines the NAD(+) pocket. Position 208 (lysine 208) interacts with UDP-alpha-D-glucuronate. Position 209 (threonine 209) interacts with NAD(+). Residues asparagine 216, glycine 219, lysine 222, and arginine 223 each contribute to the UDP-alpha-D-glucuronate site. Tyrosine 262 and lysine 266 together coordinate NAD(+). The active-site Proton acceptor is the tyrosine 262. Residue tyrosine 276 participates in UDP-alpha-D-glucuronate binding. NAD(+) is bound by residues threonine 292 and arginine 303. Positions 380–401 (EFKPNTADDPHKRKPDISKAKE) are disordered. A compositionally biased stretch (basic and acidic residues) spans 385-401 (TADDPHKRKPDISKAKE).

This sequence belongs to the NAD(P)-dependent epimerase/dehydratase family. UDP-glucuronic acid decarboxylase subfamily. Requires NAD(+) as cofactor. Ubiquitous.

Its subcellular location is the golgi apparatus. The protein localises to the golgi stack membrane. It carries out the reaction UDP-alpha-D-glucuronate + H(+) = UDP-alpha-D-xylose + CO2. It participates in nucleotide-sugar biosynthesis; UDP-alpha-D-xylose biosynthesis; UDP-alpha-D-xylose from UDP-alpha-D-glucuronate: step 1/1. In terms of biological role, catalyzes the NAD-dependent decarboxylation of UDP-glucuronic acid to UDP-xylose. Necessary for the biosynthesis of the core tetrasaccharide in glycosaminoglycan biosynthesis. The polypeptide is UDP-glucuronic acid decarboxylase 1 (Arabidopsis thaliana (Mouse-ear cress)).